A 123-amino-acid polypeptide reads, in one-letter code: Large ribosomal subunit protein uL29 (123 aa).

At K19 the chain carries N6-acetyllysine. K25 participates in a covalent cross-link: Glycyl lysine isopeptide (Lys-Gly) (interchain with G-Cter in SUMO2). Phosphoserine is present on S29. K43 is subject to N6-acetyllysine.

Belongs to the universal ribosomal protein uL29 family. Component of the large ribosomal subunit.

The protein localises to the cytoplasm. Functionally, component of the large ribosomal subunit. The ribosome is a large ribonucleoprotein complex responsible for the synthesis of proteins in the cell. The chain is Large ribosomal subunit protein uL29 (RPL35) from Sus scrofa (Pig).